The following is a 319-amino-acid chain: tRNA uridine(34) hydroxylase (319 aa).

In terms of domain architecture, Rhodanese spans 127–221; it reads KQEDTVIIDA…YGKDPEVQGE (95 aa). Residue Cys-181 is the Cysteine persulfide intermediate of the active site.

This sequence belongs to the TrhO family.

The enzyme catalyses uridine(34) in tRNA + AH2 + O2 = 5-hydroxyuridine(34) in tRNA + A + H2O. Its function is as follows. Catalyzes oxygen-dependent 5-hydroxyuridine (ho5U) modification at position 34 in tRNAs. This is tRNA uridine(34) hydroxylase from Bacillus cereus (strain Q1).